Here is a 430-residue protein sequence, read N- to C-terminus: Adenylosuccinate synthetase (430 aa).

GTP-binding positions include 13–19 (GDEGKGK) and 41–43 (GHT). Residue aspartate 14 is the Proton acceptor of the active site. Aspartate 14 and glycine 41 together coordinate Mg(2+). IMP-binding positions include 14-17 (DEGK), 39-42 (NAGH), threonine 130, arginine 144, glutamine 225, threonine 240, and arginine 304. The Proton donor role is filled by histidine 42. 300–306 (STTGRAR) contacts substrate. GTP contacts are provided by residues arginine 306, 332 to 334 (KLD), and 414 to 416 (STG).

Belongs to the adenylosuccinate synthetase family. Homodimer. Mg(2+) serves as cofactor.

Its subcellular location is the cytoplasm. The enzyme catalyses IMP + L-aspartate + GTP = N(6)-(1,2-dicarboxyethyl)-AMP + GDP + phosphate + 2 H(+). It functions in the pathway purine metabolism; AMP biosynthesis via de novo pathway; AMP from IMP: step 1/2. Functionally, plays an important role in the de novo pathway of purine nucleotide biosynthesis. Catalyzes the first committed step in the biosynthesis of AMP from IMP. The polypeptide is Adenylosuccinate synthetase (Alcanivorax borkumensis (strain ATCC 700651 / DSM 11573 / NCIMB 13689 / SK2)).